The following is a 476-amino-acid chain: Nuclear envelope morphology protein 1 (476 aa).

The tract at residues 47–74 (RRRSSYSASSLSSLSSKPTEKEVPTRNE) is disordered. Low complexity predominate over residues 51–62 (SYSASSLSSLSS). Residues 64-74 (PTEKEVPTRNE) are compositionally biased toward basic and acidic residues. The chain crosses the membrane as a helical span at residues 123–139 (FFWGLCRFVFFPVLLSY). Disordered regions lie at residues 164-190 (SSHQ…SNGN) and 232-256 (GKAN…PAND). The segment covering 234–256 (ANSNRSGHSHQPQSTQFSPPAND) has biased composition (polar residues). 4 N-linked (GlcNAc...) asparagine glycosylation sites follow: N237, N257, N284, and N356. The FCP1 homology domain maps to 299-460 (SKLPRKTLVL…LNLLSFLHAL (162 aa)).

It belongs to the Dullard family. As to quaternary structure, component of the nem1-spo7 complex.

It localises to the endoplasmic reticulum membrane. Its subcellular location is the nucleus membrane. The catalysed reaction is O-phospho-L-seryl-[protein] + H2O = L-seryl-[protein] + phosphate. The enzyme catalyses O-phospho-L-threonyl-[protein] + H2O = L-threonyl-[protein] + phosphate. Its function is as follows. Catalytic component of the nem1-spo7 complex which acts as a phosphatase and may be required for proper nuclear membrane morphology. The protein is Nuclear envelope morphology protein 1 (nem1) of Schizosaccharomyces pombe (strain 972 / ATCC 24843) (Fission yeast).